Reading from the N-terminus, the 75-residue chain is Small ribosomal subunit protein bS18 (75 aa).

Belongs to the bacterial ribosomal protein bS18 family. Part of the 30S ribosomal subunit. Forms a tight heterodimer with protein bS6.

In terms of biological role, binds as a heterodimer with protein bS6 to the central domain of the 16S rRNA, where it helps stabilize the platform of the 30S subunit. The protein is Small ribosomal subunit protein bS18 of Acinetobacter baylyi (strain ATCC 33305 / BD413 / ADP1).